Reading from the N-terminus, the 352-residue chain is MASEKEIRRERFLNVFPKLVEELNASLLAYGMPKEACDWYAHSLNYNTPGGKLNRGLSVVDTYAILSNKTVEQLGQEEYEKVAILGWCIELLQAYFLVADDMMDKSITRRGQPCWYKVPEVGEIAINDAFMLEAAIYKLLKSHFRNEKYYIDITELFHEVTFQTELGQLMDLITAPEDKVDLSKFSLKKHSFIVTFKTAYYSFYLPVALAMYVAGITDEKDLKQARDVLIPLGEYFQIQDDYLDCFGTPEQIGKIGTDIQDNKCSWVINKALELASAEQRKTLDENYGKKDSVAEAKCKKIFNDLKIEQLYHEYEESIAKDLKAKISQVDESRGFKADVLTAFLNKVYKRSK.

Isopentenyl diphosphate contacts are provided by lysine 52, arginine 55, and glutamine 93. Residues aspartate 100 and aspartate 104 each coordinate Mg(2+). Residue arginine 109 coordinates dimethylallyl diphosphate. Residue arginine 110 coordinates isopentenyl diphosphate. 5 residues coordinate dimethylallyl diphosphate: lysine 197, threonine 198, glutamine 237, lysine 254, and lysine 263.

This sequence belongs to the FPP/GGPP synthase family. It depends on Mg(2+) as a cofactor.

The catalysed reaction is isopentenyl diphosphate + dimethylallyl diphosphate = (2E)-geranyl diphosphate + diphosphate. The enzyme catalyses isopentenyl diphosphate + (2E)-geranyl diphosphate = (2E,6E)-farnesyl diphosphate + diphosphate. It participates in isoprenoid biosynthesis; farnesyl diphosphate biosynthesis; farnesyl diphosphate from geranyl diphosphate and isopentenyl diphosphate: step 1/1. Its pathway is isoprenoid biosynthesis; geranyl diphosphate biosynthesis; geranyl diphosphate from dimethylallyl diphosphate and isopentenyl diphosphate: step 1/1. Functionally, farnesyl pyrophosphate synthase; part of the second module of ergosterol biosynthesis pathway that includes the middle steps of the pathway. ERG20 catalyzes the sequential condensation of isopentenyl pyrophosphate with dimethylallyl pyrophosphate, and then with the resultant geranylpyrophosphate to the ultimate product farnesyl pyrophosphate. The second module is carried out in the vacuole and involves the formation of farnesyl diphosphate, which is also an important intermediate in the biosynthesis of ubiquinone, dolichol, heme and prenylated proteins. Activity by the mevalonate kinase ERG12 first converts mevalonate into 5-phosphomevalonate. 5-phosphomevalonate is then further converted to 5-diphosphomevalonate by the phosphomevalonate kinase ERG8. The diphosphomevalonate decarboxylase MVD1/ERG19 then produces isopentenyl diphosphate. The isopentenyl-diphosphate delta-isomerase IDI1 then catalyzes the 1,3-allylic rearrangement of the homoallylic substrate isopentenyl (IPP) to its highly electrophilic allylic isomer, dimethylallyl diphosphate (DMAPP). Finally the farnesyl diphosphate synthase ERG20 catalyzes the sequential condensation of isopentenyl pyrophosphate with dimethylallyl pyrophosphate, and then with the resultant geranylpyrophosphate to the ultimate product farnesyl pyrophosphate. In Saccharomyces cerevisiae (strain ATCC 204508 / S288c) (Baker's yeast), this protein is Farnesyl pyrophosphate synthase (ERG20).